The primary structure comprises 187 residues: Thioredoxin F, chloroplastic (187 aa).

The transit peptide at 1–72 (MALRLSVSSS…GSDTATVGAE (72 aa)) directs the protein to the chloroplast. The 114-residue stretch at 73–186 (AEAVAVTGQV…LIQAIETVKS (114 aa)) folds into the Thioredoxin domain. Residues Cys-111 and Cys-114 each act as nucleophile in the active site. Residues Cys-111 and Cys-114 are joined by a disulfide bond.

This sequence belongs to the thioredoxin family. Plant F-type subfamily.

It localises to the plastid. Its subcellular location is the chloroplast. Its function is as follows. Thiol-disulfide oxidoreductase involved in the redox regulation of enzymes of both reductive pentose phosphate pathway (Calvin-Benson cycle) and oxidative pentose phosphate pathway. This chain is Thioredoxin F, chloroplastic, found in Oryza sativa subsp. japonica (Rice).